An 876-amino-acid chain; its full sequence is Leucine--tRNA ligase (876 aa).

The 'HIGH' region signature appears at 43-53; it reads PYPSGRIHMGH. The short motif at 632–636 is the 'KMSKS' region element; it reads KMSKS. Lys-635 contributes to the ATP binding site.

Belongs to the class-I aminoacyl-tRNA synthetase family.

It is found in the cytoplasm. It carries out the reaction tRNA(Leu) + L-leucine + ATP = L-leucyl-tRNA(Leu) + AMP + diphosphate. The chain is Leucine--tRNA ligase from Sinorhizobium medicae (strain WSM419) (Ensifer medicae).